The primary structure comprises 764 residues: G-type lectin S-receptor-like serine/threonine-protein kinase SD3-1 (764 aa).

The signal sequence occupies residues 1–24 (MKMLRALLLCLSLVFFLAFQIVVS). Bulb-type lectin domains are found at residues 25 to 151 (EIQL…QSFG) and 154 to 279 (TDTL…WKPV). Over 25–442 (EIQLGSKLVV…TKSHSICIPC (418 aa)) the chain is Extracellular. 3 N-linked (GlcNAc...) asparagine glycosylation sites follow: Asn-92, Asn-198, and Asn-248. In terms of domain architecture, EGF-like; atypical spans 283–320 (VENQCRVFATCGSQVCSFNSSGYTECNCPFNAFVSVSD). 5 cysteine pairs are disulfide-bonded: Cys-287/Cys-298, Cys-293/Cys-308, Cys-332/Cys-413, Cys-365/Cys-388, and Cys-369/Cys-375. Residues Asn-301 and Asn-353 are each glycosylated (N-linked (GlcNAc...) asparagine). Positions 332–413 (CKSGFNMVKF…LSSISYVKTC (82 aa)) constitute an Apple domain. The N-linked (GlcNAc...) asparagine glycan is linked to Asn-423. The helical transmembrane segment at 443–463 (LVGATSTTLVLFLGFQLGIVV) threads the bilayer. Residues 464–764 (YIYRRKKKLA…SESSQSLYEP (301 aa)) are Cytoplasmic-facing. Residues 466–764 (YRRKKKLAKK…SESSQSLYEP (299 aa)) enclose the Protein kinase domain. ATP contacts are provided by residues 508–516 (IGPQIFKGV) and Lys-526. The interval 586–603 (LRSKKLTWRIRTDTCLSV) is caM-binding. Residues 738 to 764 (DPPPPPFACARSSPTNSSESSQSLYEP) are disordered. Residues 749 to 764 (SSPTNSSESSQSLYEP) are compositionally biased toward low complexity.

Its subcellular location is the cell membrane. It carries out the reaction L-seryl-[protein] + ATP = O-phospho-L-seryl-[protein] + ADP + H(+). The enzyme catalyses L-threonyl-[protein] + ATP = O-phospho-L-threonyl-[protein] + ADP + H(+). This Arabidopsis thaliana (Mouse-ear cress) protein is G-type lectin S-receptor-like serine/threonine-protein kinase SD3-1 (SD31).